The chain runs to 55 residues: Protein SOX-19 (55 aa).

Residues 1–55 constitute a DNA-binding region (HMG box); it reads MVWSQIERRKIMEQWPDMHNAEISKRLGKRWKLLPDYEKIPFIKEAERLRLKHMA.

The protein resides in the nucleus. In Mus musculus (Mouse), this protein is Protein SOX-19 (Sox19).